We begin with the raw amino-acid sequence, 326 residues long: tRNA-modifying protein YgfZ (326 aa).

The folate site is built by W27 and W189.

Belongs to the tRNA-modifying YgfZ family.

Its subcellular location is the cytoplasm. In terms of biological role, folate-binding protein involved in regulating the level of ATP-DnaA and in the modification of some tRNAs. It is probably a key factor in regulatory networks that act via tRNA modification, such as initiation of chromosomal replication. This Shigella boydii serotype 18 (strain CDC 3083-94 / BS512) protein is tRNA-modifying protein YgfZ.